We begin with the raw amino-acid sequence, 295 residues long: Protease Rv3090 (295 aa).

The next 2 membrane-spanning stretches (helical) occupy residues Thr2–Trp22 and Val37–Val57.

It is found in the cell membrane. The protein localises to the secreted. The protein resides in the cell wall. In terms of biological role, protease that triggers late cell apoptosis and contributes to the pathogenicity and dissemination of M.tuberculosis. In a mouse model of infection, can induce hepatocyte and lung cell apoptosis and cause pathological damage to the spleen, liver and lungs. Specifically stimulates the secretion of inflammatory cytokines including TNF-alpha, IL-6 and IL-1 beta. Can degrade casein in vitro. The protein is Protease Rv3090 of Mycobacterium tuberculosis (strain ATCC 25618 / H37Rv).